A 256-amino-acid polypeptide reads, in one-letter code: UPF0246 protein Swoo_1284 (256 aa).

Belongs to the UPF0246 family.

The polypeptide is UPF0246 protein Swoo_1284 (Shewanella woodyi (strain ATCC 51908 / MS32)).